Here is a 103-residue protein sequence, read N- to C-terminus: UPF0145 protein BC_5181 (103 aa).

Belongs to the UPF0145 family.

The sequence is that of UPF0145 protein BC_5181 from Bacillus cereus (strain ATCC 14579 / DSM 31 / CCUG 7414 / JCM 2152 / NBRC 15305 / NCIMB 9373 / NCTC 2599 / NRRL B-3711).